The primary structure comprises 379 residues: Lipid-A-disaccharide synthase (379 aa).

Belongs to the LpxB family.

The catalysed reaction is a lipid X + a UDP-2-N,3-O-bis[(3R)-3-hydroxyacyl]-alpha-D-glucosamine = a lipid A disaccharide + UDP + H(+). It functions in the pathway bacterial outer membrane biogenesis; LPS lipid A biosynthesis. In terms of biological role, condensation of UDP-2,3-diacylglucosamine and 2,3-diacylglucosamine-1-phosphate to form lipid A disaccharide, a precursor of lipid A, a phosphorylated glycolipid that anchors the lipopolysaccharide to the outer membrane of the cell. This chain is Lipid-A-disaccharide synthase, found in Idiomarina loihiensis (strain ATCC BAA-735 / DSM 15497 / L2-TR).